The following is a 129-amino-acid chain: S-adenosylmethionine decarboxylase proenzyme (129 aa).

The active-site Schiff-base intermediate with substrate; via pyruvic acid is serine 63. Serine 63 bears the Pyruvic acid (Ser); by autocatalysis mark. Histidine 68 serves as the catalytic Proton acceptor; for processing activity. Cysteine 83 functions as the Proton donor; for catalytic activity in the catalytic mechanism.

It belongs to the prokaryotic AdoMetDC family. Type 1 subfamily. Heterotetramer of two alpha and two beta chains arranged as a dimer of alpha/beta heterodimers. Pyruvate serves as cofactor. In terms of processing, is synthesized initially as an inactive proenzyme. Formation of the active enzyme involves a self-maturation process in which the active site pyruvoyl group is generated from an internal serine residue via an autocatalytic post-translational modification. Two non-identical subunits are generated from the proenzyme in this reaction, and the pyruvate is formed at the N-terminus of the alpha chain, which is derived from the carboxyl end of the proenzyme. The post-translation cleavage follows an unusual pathway, termed non-hydrolytic serinolysis, in which the side chain hydroxyl group of the serine supplies its oxygen atom to form the C-terminus of the beta chain, while the remainder of the serine residue undergoes an oxidative deamination to produce ammonia and the pyruvoyl group blocking the N-terminus of the alpha chain.

The enzyme catalyses S-adenosyl-L-methionine + H(+) = S-adenosyl 3-(methylsulfanyl)propylamine + CO2. Its pathway is amine and polyamine biosynthesis; S-adenosylmethioninamine biosynthesis; S-adenosylmethioninamine from S-adenosyl-L-methionine: step 1/1. Its function is as follows. Catalyzes the decarboxylation of S-adenosylmethionine to S-adenosylmethioninamine (dcAdoMet), the propylamine donor required for the synthesis of the polyamines spermine and spermidine from the diamine putrescine. The sequence is that of S-adenosylmethionine decarboxylase proenzyme from Shouchella clausii (strain KSM-K16) (Alkalihalobacillus clausii).